Consider the following 234-residue polypeptide: Glucosamine-6-phosphate deaminase (234 aa).

The Proton acceptor; for enolization step role is filled by D62. Catalysis depends on N128, which acts as the For ring-opening step. H130 serves as the catalytic Proton acceptor; for ring-opening step. The active-site For ring-opening step is the E135.

The protein belongs to the glucosamine/galactosamine-6-phosphate isomerase family. NagB subfamily.

The catalysed reaction is alpha-D-glucosamine 6-phosphate + H2O = beta-D-fructose 6-phosphate + NH4(+). It participates in amino-sugar metabolism; N-acetylneuraminate degradation; D-fructose 6-phosphate from N-acetylneuraminate: step 5/5. In terms of biological role, catalyzes the reversible isomerization-deamination of glucosamine 6-phosphate (GlcN6P) to form fructose 6-phosphate (Fru6P) and ammonium ion. This chain is Glucosamine-6-phosphate deaminase, found in Streptococcus pyogenes serotype M3 (strain ATCC BAA-595 / MGAS315).